The primary structure comprises 671 residues: UvrABC system protein B (671 aa).

In terms of domain architecture, Helicase ATP-binding spans 25–412 (EGIEAGLSHQ…AGRVVEQVVR (388 aa)). Residue 38–45 (GVTGSGKT) participates in ATP binding. The Beta-hairpin motif lies at 91 to 114 (YYDYYQPEAYVPSSDTFIEKDASI). Residues 429–582 (QVDDLLSEIR…QIAFNEANGI (154 aa)) form the Helicase C-terminal domain. Positions 632 to 667 (TKRIKQLEEKMMQFARDLEFEAAAQLRDEIAQLRER) constitute a UVR domain.

This sequence belongs to the UvrB family. Forms a heterotetramer with UvrA during the search for lesions. Interacts with UvrC in an incision complex.

It localises to the cytoplasm. Functionally, the UvrABC repair system catalyzes the recognition and processing of DNA lesions. A damage recognition complex composed of 2 UvrA and 2 UvrB subunits scans DNA for abnormalities. Upon binding of the UvrA(2)B(2) complex to a putative damaged site, the DNA wraps around one UvrB monomer. DNA wrap is dependent on ATP binding by UvrB and probably causes local melting of the DNA helix, facilitating insertion of UvrB beta-hairpin between the DNA strands. Then UvrB probes one DNA strand for the presence of a lesion. If a lesion is found the UvrA subunits dissociate and the UvrB-DNA preincision complex is formed. This complex is subsequently bound by UvrC and the second UvrB is released. If no lesion is found, the DNA wraps around the other UvrB subunit that will check the other stand for damage. The chain is UvrABC system protein B from Pseudomonas putida (strain ATCC 47054 / DSM 6125 / CFBP 8728 / NCIMB 11950 / KT2440).